A 342-amino-acid chain; its full sequence is Alanine racemase (342 aa).

K33 acts as the Proton acceptor; specific for D-alanine in catalysis. K33 is subject to N6-(pyridoxal phosphate)lysine. R128 contributes to the substrate binding site. The active-site Proton acceptor; specific for L-alanine is the Y240. M288 is a binding site for substrate.

It belongs to the alanine racemase family. The cofactor is pyridoxal 5'-phosphate.

It carries out the reaction L-alanine = D-alanine. It functions in the pathway amino-acid biosynthesis; D-alanine biosynthesis; D-alanine from L-alanine: step 1/1. Functionally, catalyzes the interconversion of L-alanine and D-alanine. May also act on other amino acids. The sequence is that of Alanine racemase (alr) from Jannaschia sp. (strain CCS1).